The chain runs to 162 residues: Peroxiredoxin-2 (162 aa).

Positions I4 to L162 constitute a Thioredoxin domain. The active-site Cysteine sulfenic acid (-SOH) intermediate is the C51.

Belongs to the peroxiredoxin family. Prx5 subfamily. As to quaternary structure, monomer. Homodimer. Glutathionylation of C(P) causes the dimer to dissociate. Subsequent reduction of the mixed disulfide bond leads again to dimerization.

It carries out the reaction [glutaredoxin]-dithiol + a hydroperoxide = [glutaredoxin]-disulfide + an alcohol + H2O. In terms of biological role, thiol-specific peroxidase that catalyzes the reduction of hydrogen peroxide and organic hydroperoxides to water and alcohols, respectively. Can reduce H(2)O(2) and short chain organic, fatty acid, and phospholipid hydroperoxides. Plays a role in cell protection against oxidative stress by detoxifying peroxides. The polypeptide is Peroxiredoxin-2 (Populus trichocarpa (Western balsam poplar)).